The sequence spans 318 residues: Transaldolase (318 aa).

K126 acts as the Schiff-base intermediate with substrate in catalysis.

The protein belongs to the transaldolase family. Type 1 subfamily. Homodimer.

The protein localises to the cytoplasm. The enzyme catalyses D-sedoheptulose 7-phosphate + D-glyceraldehyde 3-phosphate = D-erythrose 4-phosphate + beta-D-fructose 6-phosphate. It participates in carbohydrate degradation; pentose phosphate pathway; D-glyceraldehyde 3-phosphate and beta-D-fructose 6-phosphate from D-ribose 5-phosphate and D-xylulose 5-phosphate (non-oxidative stage): step 2/3. Transaldolase is important for the balance of metabolites in the pentose-phosphate pathway. The chain is Transaldolase from Cupriavidus necator (strain ATCC 17699 / DSM 428 / KCTC 22496 / NCIMB 10442 / H16 / Stanier 337) (Ralstonia eutropha).